The primary structure comprises 142 residues: ATP synthase subunit b' (142 aa).

A helical membrane pass occupies residues 7–27 (TLPLMMFQFFLLVAVLNAVFF).

The protein belongs to the ATPase B chain family. F-type ATPases have 2 components, F(1) - the catalytic core - and F(0) - the membrane proton channel. F(1) has five subunits: alpha(3), beta(3), gamma(1), delta(1), epsilon(1). F(0) has four main subunits: a(1), b(1), b'(1) and c(10-14). The alpha and beta chains form an alternating ring which encloses part of the gamma chain. F(1) is attached to F(0) by a central stalk formed by the gamma and epsilon chains, while a peripheral stalk is formed by the delta, b and b' chains.

Its subcellular location is the cellular thylakoid membrane. F(1)F(0) ATP synthase produces ATP from ADP in the presence of a proton or sodium gradient. F-type ATPases consist of two structural domains, F(1) containing the extramembraneous catalytic core and F(0) containing the membrane proton channel, linked together by a central stalk and a peripheral stalk. During catalysis, ATP synthesis in the catalytic domain of F(1) is coupled via a rotary mechanism of the central stalk subunits to proton translocation. In terms of biological role, component of the F(0) channel, it forms part of the peripheral stalk, linking F(1) to F(0). The b'-subunit is a diverged and duplicated form of b found in plants and photosynthetic bacteria. This chain is ATP synthase subunit b', found in Acaryochloris marina (strain MBIC 11017).